The primary structure comprises 1170 residues: Putative DNA topoisomerase 2, mitochondrial (1170 aa).

ATP contacts are provided by residues Asn-106, Asn-135, Ser-163–Asn-165, Gly-176–Lys-183, and Gln-396–Lys-398. The Toprim domain maps to Cys-475–Gln-590. Mg(2+) is bound by residues Glu-481, Asp-559, and Asp-561. Residues Ile-722 to Leu-1157 enclose the Topo IIA-type catalytic domain. Residue Tyr-813 is the O-(5'-phospho-DNA)-tyrosine intermediate of the active site.

Belongs to the type II topoisomerase family. Homodimer. Mg(2+) is required as a cofactor. It depends on Mn(2+) as a cofactor. The cofactor is Ca(2+).

The protein resides in the mitochondrion. The catalysed reaction is ATP-dependent breakage, passage and rejoining of double-stranded DNA.. In terms of biological role, control of topological states of DNA by transient breakage and subsequent rejoining of DNA strands. Topoisomerase II makes double-strand breaks. This is Putative DNA topoisomerase 2, mitochondrial from Caenorhabditis elegans.